A 576-amino-acid polypeptide reads, in one-letter code: MRMNKFYMPTLREDPQDAEIASHKLLLRAGMIRKTAAGLYSYLPLGYRIVRKVENIVREEMDNYGSQEIHMPITQPREIWEESGRWKTFGPEMFKLKDRNNREFCLGPTAEEYFTDLVKGEIKSYKQLPLNIYQIQTKYRDEKRPRFGINRSREFLMQDAYTFDVNEEAMGEAYMNMWRAYEVVFNRLGLEYKIVAGDSGAMGGNSSHEFIALSDVGEGVICYSDDSDFAATDEKAYVYYQVNDENVEKLSSEKVLTPNCKTIEEVSDFLNVDAAHCLKAVDLMVEGKPVIVFIPGDRELNMSKLVSYLKCPEHEIEMMEEQDILALNSSPGFTGPIGLDCRIIIDSRVKQMKNFVVGANEENYHIKNVNYGDDFEGEIVEDLLMVQEGDIDPETKSPLKFKRGIEVGNIFQLGQKYSKSMNATFLDENGKEQFFWMGSYGIGVTRSVSAIVEQNHDDKGMIWPLVVAPYHVIITIVNTKDEEQNTLAEKLYEKLLLQGVEVLLDDRKERVGVKFNDRDLIGIPLRITVGKKAAEDIVEFSERRTLENVEMSSTEAYEKVMEIINSNLKSVGGLYR.

Belongs to the class-II aminoacyl-tRNA synthetase family. ProS type 1 subfamily. In terms of assembly, homodimer.

The protein resides in the cytoplasm. It carries out the reaction tRNA(Pro) + L-proline + ATP = L-prolyl-tRNA(Pro) + AMP + diphosphate. Its function is as follows. Catalyzes the attachment of proline to tRNA(Pro) in a two-step reaction: proline is first activated by ATP to form Pro-AMP and then transferred to the acceptor end of tRNA(Pro). As ProRS can inadvertently accommodate and process non-cognate amino acids such as alanine and cysteine, to avoid such errors it has two additional distinct editing activities against alanine. One activity is designated as 'pretransfer' editing and involves the tRNA(Pro)-independent hydrolysis of activated Ala-AMP. The other activity is designated 'posttransfer' editing and involves deacylation of mischarged Ala-tRNA(Pro). The misacylated Cys-tRNA(Pro) is not edited by ProRS. The chain is Proline--tRNA ligase from Finegoldia magna (strain ATCC 29328 / DSM 20472 / WAL 2508) (Peptostreptococcus magnus).